Here is a 96-residue protein sequence, read N- to C-terminus: RNA-binding protein Hfq (96 aa).

Positions 9–68 constitute a Sm domain; that stretch reads DPYLNALRRERIPVSIYLVNGIKLQGQIESFDQFVILLKNTVNQMVYKHAISTVVPARSV. A disordered region spans residues 65 to 96; sequence ARSVSHHNNPQQQQQHSQQTESAAPAAEPQAE. Residues 70-96 are compositionally biased toward low complexity; it reads HHNNPQQQQQHSQQTESAAPAAEPQAE.

Belongs to the Hfq family. In terms of assembly, homohexamer.

In terms of biological role, RNA chaperone that binds small regulatory RNA (sRNAs) and mRNAs to facilitate mRNA translational regulation in response to envelope stress, environmental stress and changes in metabolite concentrations. Also binds with high specificity to tRNAs. The chain is RNA-binding protein Hfq from Mannheimia succiniciproducens (strain KCTC 0769BP / MBEL55E).